Here is a 464-residue protein sequence, read N- to C-terminus: Methionine aminopeptidase 2-2 (464 aa).

Residues 1–106 (MGAKTYEGGD…PRVPLSQLFP (106 aa)) form a disordered region. Residues 37 to 53 (EDGDGEFGSDDDDDGGD) show a composition bias toward acidic residues. The span at 70 to 86 (PKKKKRSKKKKNNKKKS) shows a compositional bias: basic residues. His216 lines the substrate pocket. Asp237, Asp248, and His317 together coordinate a divalent metal cation. His325 provides a ligand contact to substrate. Residues Glu350 and Glu445 each coordinate a divalent metal cation.

Belongs to the peptidase M24A family. Methionine aminopeptidase eukaryotic type 2 subfamily. Requires Co(2+) as cofactor. Zn(2+) serves as cofactor. It depends on Mn(2+) as a cofactor. Fe(2+) is required as a cofactor.

The protein resides in the cytoplasm. It catalyses the reaction Release of N-terminal amino acids, preferentially methionine, from peptides and arylamides.. In terms of biological role, cotranslationally removes the N-terminal methionine from nascent proteins. The N-terminal methionine is often cleaved when the second residue in the primary sequence is small and uncharged (Met-Ala-, Cys, Gly, Pro, Ser, Thr, or Val). The sequence is that of Methionine aminopeptidase 2-2 from Talaromyces stipitatus (strain ATCC 10500 / CBS 375.48 / QM 6759 / NRRL 1006) (Penicillium stipitatum).